A 3948-amino-acid polypeptide reads, in one-letter code: Equisetin synthetase eqxS (3948 aa).

The Ketosynthase family 3 (KS3) domain maps to 4–438 (SEPIAVIGSA…GTNAHAIIEA (435 aa)). Active-site for beta-ketoacyl synthase activity residues include Cys177, His316, and His358. The malonyl-CoA:ACP transacylase (MAT) domain stretch occupies residues 543 to 847 (IFTGQGTQWP…DTIEAISEGR (305 aa)). Residues 931 to 1066 (HPLLGRRCHD…AQIKASLGAP (136 aa)) are N-terminal hotdog fold. Residues 931–1233 (HPLLGRRCHD…MELVPFSPAT (303 aa)) are dehydratase (DH) domain. One can recognise a PKS/mFAS DH domain in the interval 931–1235 (HPLLGRRCHD…LVPFSPATPA (305 aa)). Residue His964 is the Proton acceptor; for dehydratase activity of the active site. Residues 1081-1235 (LRPVSVDRFY…LVPFSPATPA (155 aa)) are C-terminal hotdog fold. The active-site Proton donor; for dehydratase activity is the Asp1141. Residues 1376 to 1574 (MLQDVYEQGF…GIDTTTPPVH (199 aa)) are methyltransferase (MT) domain. Residues 2105-2277 (TFLLVGLTGE…VAASSIDISS (173 aa)) are ketoreductase (KR) domain. A Carrier 1 domain is found at 2389–2464 (AIIKESFIVR…DLVDECLDLL (76 aa)). At Ser2424 the chain carries O-(pantetheine 4'-phosphoryl)serine. The segment at 2480-2553 (QAAKPTTVIP…NSTDILAPPR (74 aa)) is disordered. 2 stretches are compositionally biased toward polar residues: residues 2487 to 2505 (VIPQ…QGTS) and 2513 to 2528 (GSDS…LTSW). Residues 2529–2541 (DRQDSSPPDKSDD) are compositionally biased toward basic and acidic residues. Residues 2564 to 2991 (SYGQAGFWFL…IRGSDKTVDA (428 aa)) are condensation (C) domain. An adenylation (A) (KR) domain region spans residues 3026–3424 (QVIQDNPDNI…DGLLFCDGRL (399 aa)). Residues 3540 to 3617 (EILTPSEQRL…AMAGVLEDCG (78 aa)) enclose the Carrier 2 domain. O-(pantetheine 4'-phosphoryl)serine is present on Ser3577. The tract at residues 3653–3870 (LTGSSGYLGR…MPVNEVVEAI (218 aa)) is reductase (RED) domain.

This sequence in the C-terminal section; belongs to the NRP synthetase family.

The enzyme catalyses L-serine + 7 malonyl-CoA + acetyl-CoA + 2 S-adenosyl-L-methionine + ATP + 8 NADPH + 11 H(+) = (5S)-3-[(2E,6R,8E,10E,12E)-2,6-dimethyltetradeca-2,8,10,12-tetraenoyl]-5-(hydroxymethyl)pyrrolidine-2,4-dione + AMP + 2 S-adenosyl-L-homocysteine + 7 CO2 + diphosphate + 8 NADP(+) + 8 CoA + 6 H2O. It participates in mycotoxin biosynthesis. Its function is as follows. Hybrid PKS-NRPS synthetase; part of the gene cluster that mediates the biosynthesis of equisetin, a trans-fused decalin-containing tetramic acid with antimicrobial activity. The PKS module of eqxS together with the enoylreductase eqxC catalyze the formation of the polyketide unit which is then conjugated to L-serine by the condensation domain of the eqxS NRPS module. Activity of the Dieckmann cyclase domain (RED) results in release of the Dieckmann product intermediate. Diels-Alderase eqx3 is involved in endo-selective Diels-Alder cycloaddition to form the decalin ring, leading to the production of N-desmethylequisetin also called trichosetin. Subsequent N-methylation is carried out by eqxD to give equisetin. This chain is Equisetin synthetase eqxS, found in Fusarium heterosporum.